Here is a 1206-residue protein sequence, read N- to C-terminus: Phosphoglucan, water dikinase, chloroplastic (1206 aa).

Disordered stretches follow at residues 1 to 20 and 52 to 71; these read MTSLRPLETSLSIGGRPRRG and RSAASAAERTKEKKRRDSSK. Residues 1-56 constitute a chloroplast transit peptide; the sequence is MTSLRPLETSLSIGGRPRRGLVLPPPGVGAGVLLRRGAMALPGRRGFACRGRSAAS. A CBM20 domain is found at 67–168; it reads RDSSKQPLVH…KFDIVCHWNR (102 aa). The Tele-phosphohistidine intermediate role is filled by His-776.

This sequence belongs to the PEP-utilizing enzyme family. As to quaternary structure, homodimer. Requires Mg(2+) as cofactor.

The protein resides in the plastid. It is found in the chloroplast. The catalysed reaction is [(1-&gt;4)-6-phospho-alpha-D-glucosyl](n) + n ATP + n H2O = [(1-&gt;4)-3,6-bisphospho-alpha-D-glucosyl](n) + n AMP + n phosphate + 2n H(+). In terms of biological role, mediates the incorporation of phosphate into starch-like phospho-alpha-glucan, mostly at the C-3 position of glucose units. May be required for starch degradation, suggesting that the phosphate content of starch regulates its degradability. The sequence is that of Phosphoglucan, water dikinase, chloroplastic (GWD3) from Oryza sativa subsp. japonica (Rice).